A 391-amino-acid polypeptide reads, in one-letter code: 3-ketoacyl-CoA thiolase (391 aa).

Cysteine 95 serves as the catalytic Acyl-thioester intermediate. Active-site proton acceptor residues include histidine 347 and cysteine 377.

This sequence belongs to the thiolase-like superfamily. Thiolase family. As to quaternary structure, heterotetramer of two alpha chains (FadB) and two beta chains (FadA).

The protein localises to the cytoplasm. The catalysed reaction is an acyl-CoA + acetyl-CoA = a 3-oxoacyl-CoA + CoA. Its pathway is lipid metabolism; fatty acid beta-oxidation. Catalyzes the final step of fatty acid oxidation in which acetyl-CoA is released and the CoA ester of a fatty acid two carbons shorter is formed. In Hahella chejuensis (strain KCTC 2396), this protein is 3-ketoacyl-CoA thiolase.